Reading from the N-terminus, the 290-residue chain is Light-independent protochlorophyllide reductase iron-sulfur ATP-binding protein (290 aa).

ATP-binding positions include 10 to 15 (GIGKST) and K39. S14 is a Mg(2+) binding site. [4Fe-4S] cluster-binding residues include C95 and C129. 180–181 (NR) is a binding site for ATP.

This sequence belongs to the NifH/BchL/ChlL family. As to quaternary structure, homodimer. Protochlorophyllide reductase is composed of three subunits; ChlL, ChlN and ChlB. The cofactor is [4Fe-4S] cluster.

The protein localises to the plastid. The protein resides in the chloroplast. The catalysed reaction is chlorophyllide a + oxidized 2[4Fe-4S]-[ferredoxin] + 2 ADP + 2 phosphate = protochlorophyllide a + reduced 2[4Fe-4S]-[ferredoxin] + 2 ATP + 2 H2O. Its pathway is porphyrin-containing compound metabolism; chlorophyll biosynthesis (light-independent). Its function is as follows. Component of the dark-operative protochlorophyllide reductase (DPOR) that uses Mg-ATP and reduced ferredoxin to reduce ring D of protochlorophyllide (Pchlide) to form chlorophyllide a (Chlide). This reaction is light-independent. The L component serves as a unique electron donor to the NB-component of the complex, and binds Mg-ATP. The polypeptide is Light-independent protochlorophyllide reductase iron-sulfur ATP-binding protein (Chaetosphaeridium globosum (Charophycean green alga)).